A 207-amino-acid chain; its full sequence is Putative transcriptional regulator (207 aa).

The Response regulatory domain maps to 3-118 (KVLIVDDHPA…ELLLAAKAVL (116 aa)). Residues Asp9 and Asp53 each carry the 4-aspartylphosphate modification. The HTH luxR-type domain occupies 140–205 (EARMLESLSD…GLIDFARRHE (66 aa)). Residues 155–174 (LQYLANGNTNKAIAQQLFLS) constitute a DNA-binding region (H-T-H motif).

Probable transcriptional regulator. In Pseudomonas aeruginosa (strain ATCC 15692 / DSM 22644 / CIP 104116 / JCM 14847 / LMG 12228 / 1C / PRS 101 / PAO1), this protein is Putative transcriptional regulator.